The sequence spans 374 residues: Bifunctional enzyme IspD/IspF (374 aa).

The 2-C-methyl-D-erythritol 4-phosphate cytidylyltransferase stretch occupies residues 1–213; that stretch reads MLDVTLIVLC…PCLKAPSNNF (213 aa). The tract at residues 214 to 374 is 2-C-methyl-D-erythritol 2,4-cyclodiphosphate synthase; that stretch reads FTGTGFDIHA…TLKYYNWKKR (161 aa). D220 and H222 together coordinate a divalent metal cation. 4-CDP-2-C-methyl-D-erythritol 2-phosphate-binding positions include 220-222 and 246-247; these read DIH and HS. H254 provides a ligand contact to a divalent metal cation. Residues 268-270, 273-277, 344-347, F351, and R354 contribute to the 4-CDP-2-C-methyl-D-erythritol 2-phosphate site; these read DIG, FPDTD, and TTAE.

The protein in the N-terminal section; belongs to the IspD/TarI cytidylyltransferase family. IspD subfamily. In the C-terminal section; belongs to the IspF family. The cofactor is a divalent metal cation.

The enzyme catalyses 2-C-methyl-D-erythritol 4-phosphate + CTP + H(+) = 4-CDP-2-C-methyl-D-erythritol + diphosphate. The catalysed reaction is 4-CDP-2-C-methyl-D-erythritol 2-phosphate = 2-C-methyl-D-erythritol 2,4-cyclic diphosphate + CMP. The protein operates within isoprenoid biosynthesis; isopentenyl diphosphate biosynthesis via DXP pathway; isopentenyl diphosphate from 1-deoxy-D-xylulose 5-phosphate: step 2/6. It participates in isoprenoid biosynthesis; isopentenyl diphosphate biosynthesis via DXP pathway; isopentenyl diphosphate from 1-deoxy-D-xylulose 5-phosphate: step 4/6. Its function is as follows. Bifunctional enzyme that catalyzes the formation of 4-diphosphocytidyl-2-C-methyl-D-erythritol from CTP and 2-C-methyl-D-erythritol 4-phosphate (MEP) (IspD), and catalyzes the conversion of 4-diphosphocytidyl-2-C-methyl-D-erythritol 2-phosphate (CDP-ME2P) to 2-C-methyl-D-erythritol 2,4-cyclodiphosphate (ME-CPP) with a corresponding release of cytidine 5-monophosphate (CMP) (IspF). This Aliarcobacter butzleri (strain RM4018) (Arcobacter butzleri) protein is Bifunctional enzyme IspD/IspF.